The primary structure comprises 261 residues: Ribonuclease HII (261 aa).

One can recognise an RNase H type-2 domain in the interval 71–259 (QYIAGVDEVG…VKEAKLHFES (189 aa)). Residues Asp77, Glu78, and Asp169 each contribute to the a divalent metal cation site.

This sequence belongs to the RNase HII family. It depends on Mn(2+) as a cofactor. Mg(2+) is required as a cofactor.

It localises to the cytoplasm. It catalyses the reaction Endonucleolytic cleavage to 5'-phosphomonoester.. In terms of biological role, endonuclease that specifically degrades the RNA of RNA-DNA hybrids. The sequence is that of Ribonuclease HII from Listeria innocua serovar 6a (strain ATCC BAA-680 / CLIP 11262).